The following is an 86-amino-acid chain: Small ribosomal subunit protein uS17 (86 aa).

The protein belongs to the universal ribosomal protein uS17 family. As to quaternary structure, part of the 30S ribosomal subunit.

One of the primary rRNA binding proteins, it binds specifically to the 5'-end of 16S ribosomal RNA. This Halalkalibacterium halodurans (strain ATCC BAA-125 / DSM 18197 / FERM 7344 / JCM 9153 / C-125) (Bacillus halodurans) protein is Small ribosomal subunit protein uS17.